Reading from the N-terminus, the 261-residue chain is UPF0246 protein Vapar_1301 (261 aa).

The protein belongs to the UPF0246 family.

The protein is UPF0246 protein Vapar_1301 of Variovorax paradoxus (strain S110).